The sequence spans 305 residues: NAD-dependent protein deacylase SIR4 (305 aa).

A mitochondrion-targeting transit peptide spans 1–10; the sequence is MSAQVMHNRV. The Deacetylase sirtuin-type domain occupies 11-305; it reads MGTVKDSASK…VLEELASTIR (295 aa). Residues 37–57 and 118–121 contribute to the NAD(+) site; these read GAGV…GIYS and QNVD. Catalysis depends on His-139, which acts as the Proton acceptor. Positions 147, 150, 209, and 212 each coordinate Zn(2+). NAD(+)-binding positions include 249 to 251, 275 to 277, and Ser-293; these read GSS and NLG.

The protein belongs to the sirtuin family. Class II subfamily. The cofactor is Zn(2+).

The protein resides in the mitochondrion matrix. It catalyses the reaction N(6)-acetyl-L-lysyl-[protein] + NAD(+) + H2O = 2''-O-acetyl-ADP-D-ribose + nicotinamide + L-lysyl-[protein]. Its function is as follows. NAD-dependent protein deacylase. Catalyzes the NAD-dependent hydrolysis of acyl groups from lysine residues. The sequence is that of NAD-dependent protein deacylase SIR4 from Batrachochytrium dendrobatidis (strain JAM81 / FGSC 10211) (Frog chytrid fungus).